The primary structure comprises 239 residues: Ribose-5-phosphate isomerase A (239 aa).

Residues 39–42 (SGST), 95–98 (DGAD), and 108–111 (KGGG) contribute to the substrate site. Glu117 functions as the Proton acceptor in the catalytic mechanism. Lys135 is a substrate binding site.

This sequence belongs to the ribose 5-phosphate isomerase family. As to quaternary structure, homodimer.

The enzyme catalyses aldehydo-D-ribose 5-phosphate = D-ribulose 5-phosphate. It functions in the pathway carbohydrate degradation; pentose phosphate pathway; D-ribose 5-phosphate from D-ribulose 5-phosphate (non-oxidative stage): step 1/1. Its function is as follows. Catalyzes the reversible conversion of ribose-5-phosphate to ribulose 5-phosphate. The protein is Ribose-5-phosphate isomerase A of Chlamydia muridarum (strain MoPn / Nigg).